We begin with the raw amino-acid sequence, 196 residues long: Imidazoleglycerol-phosphate dehydratase (196 aa).

This sequence belongs to the imidazoleglycerol-phosphate dehydratase family.

The protein localises to the cytoplasm. The enzyme catalyses D-erythro-1-(imidazol-4-yl)glycerol 3-phosphate = 3-(imidazol-4-yl)-2-oxopropyl phosphate + H2O. It participates in amino-acid biosynthesis; L-histidine biosynthesis; L-histidine from 5-phospho-alpha-D-ribose 1-diphosphate: step 6/9. The protein is Imidazoleglycerol-phosphate dehydratase of Acidiphilium cryptum (strain JF-5).